The sequence spans 353 residues: Melanin-concentrating hormone receptor 1 (353 aa).

A disordered region spans residues 1–29; the sequence is MDLEASLLPTGPNASNTSDGPDNLTSAGS. At 1–44 the chain is on the extracellular side; sequence MDLEASLLPTGPNASNTSDGPDNLTSAGSPPRTGSISYINIIMP. A compositionally biased stretch (polar residues) spans 12-29; that stretch reads PNASNTSDGPDNLTSAGS. Asparagine 13, asparagine 16, and asparagine 23 each carry an N-linked (GlcNAc...) asparagine glycan. The chain crosses the membrane as a helical span at residues 45–67; that stretch reads SVFGTICLLGIIGNSTVIFAVVK. Topologically, residues 68 to 79 are cytoplasmic; sequence KSKLHWCNNVPD. A helical membrane pass occupies residues 80 to 102; the sequence is IFIINLSVVDLLFLLGMPFMIHQ. Residues 103-116 lie on the Extracellular side of the membrane; that stretch reads LMGNGVWHFGETMC. Cysteine 116 and cysteine 194 form a disulfide bridge. A helical membrane pass occupies residues 117–139; the sequence is TLITAMDANSQFTSTYILTAMAI. Topologically, residues 140-158 are cytoplasmic; the sequence is DRYLATVHPISSTKFRKPS. The helical transmembrane segment at 159–181 threads the bilayer; it reads VATLVICLLWALSFISITPVWLY. The Extracellular segment spans residues 182 to 209; it reads ARLIPFPGGAVGCGIRLPNPDTDLYWFT. Residues 210-232 traverse the membrane as a helical segment; it reads LYQFFLAFALPFVVITAAYVRIL. Residues 233 to 252 are Cytoplasmic-facing; the sequence is QRMTSSVAPASQRSIRLRTK. The chain crosses the membrane as a helical span at residues 253–275; sequence RVTRTAIAICLVFFVCWAPYYVL. Residues 276-289 lie on the Extracellular side of the membrane; that stretch reads QLTQLSISRPTLTF. Residues 290 to 312 traverse the membrane as a helical segment; the sequence is VYLYNAAISLGYANSCLNPFVYI. Over 313–353 the chain is Cytoplasmic; the sequence is VLCETFRKRLVLSVKPAAQGQLRAVSNAQTADEERTESKGT.

The protein belongs to the G-protein coupled receptor 1 family. Interacts with NCDN. In terms of tissue distribution, highest level in brain, particularly in the frontal cortex and hypothalamus, lower levels in the liver and heart.

It is found in the cell membrane. In terms of biological role, receptor for melanin-concentrating hormone, coupled to both G proteins that inhibit adenylyl cyclase and G proteins that activate phosphoinositide hydrolysis. The polypeptide is Melanin-concentrating hormone receptor 1 (Homo sapiens (Human)).